Reading from the N-terminus, the 198-residue chain is Large ribosomal subunit protein bL25 (198 aa).

It belongs to the bacterial ribosomal protein bL25 family. CTC subfamily. Part of the 50S ribosomal subunit; part of the 5S rRNA/L5/L18/L25 subcomplex. Contacts the 5S rRNA. Binds to the 5S rRNA independently of L5 and L18.

This is one of the proteins that binds to the 5S RNA in the ribosome where it forms part of the central protuberance. The sequence is that of Large ribosomal subunit protein bL25 from Lysinibacillus sphaericus (strain C3-41).